We begin with the raw amino-acid sequence, 100 residues long: MNPRQLEQMARQMQKEMMRIQEELANTTVEGTAGSYVTVTMNGHREIKSIKLAPEVVDPDDVETLQDLIVAAIADASKKAQELAEQRLGPLAGGMKLPGF.

It belongs to the YbaB/EbfC family. As to quaternary structure, homodimer.

It localises to the cytoplasm. Its subcellular location is the nucleoid. In terms of biological role, binds to DNA and alters its conformation. May be involved in regulation of gene expression, nucleoid organization and DNA protection. The sequence is that of Nucleoid-associated protein RoseRS_1534 from Roseiflexus sp. (strain RS-1).